We begin with the raw amino-acid sequence, 20 residues long: Hemocyanin subunit Ia (20 aa).

The disordered stretch occupies residues 1–20; the sequence is ADXQPGDSTDKLLAQKQDDV.

Belongs to the tyrosinase family. Hemocyanin subfamily. In terms of assembly, composed of 3 major subunits (IB, II and III) and 1 minor subunit (IA) which form homohexamers and heterohexamers. May also form larger structures. In terms of tissue distribution, hemolymph.

It is found in the secreted. It localises to the extracellular space. Hemocyanins are copper-containing oxygen carriers occurring freely dissolved in the hemolymph of many mollusks and arthropods. The sequence is that of Hemocyanin subunit Ia from Panulirus japonicus (Japanese spiny lobster).